A 282-amino-acid chain; its full sequence is uncharacterized protein (282 aa).

The helical transmembrane segment at 22 to 42 threads the bilayer; it reads YLFTLGSFVTMFFVLCISPVF.

It is found in the cell membrane. This is an uncharacterized protein from Bacillus anthracis.